Here is a 473-residue protein sequence, read N- to C-terminus: Cysteine--tRNA ligase (473 aa).

A Zn(2+)-binding site is contributed by C27. The 'HIGH' region motif lies at 29 to 39; that stretch reads ITPYDHVHVGH. Residues C213, H238, and E242 each contribute to the Zn(2+) site. The 'KMSKS' region signature appears at 271–275; the sequence is KMSKS. K274 lines the ATP pocket.

It belongs to the class-I aminoacyl-tRNA synthetase family. The cofactor is Zn(2+).

The protein localises to the cytoplasm. It carries out the reaction tRNA(Cys) + L-cysteine + ATP = L-cysteinyl-tRNA(Cys) + AMP + diphosphate. In Pyrobaculum calidifontis (strain DSM 21063 / JCM 11548 / VA1), this protein is Cysteine--tRNA ligase.